Reading from the N-terminus, the 345-residue chain is Homeobox protein DBX1 (345 aa).

2 disordered regions span residues 55 to 103 (PRGS…VSPA) and 241 to 345 (KERE…ITVS). A DNA-binding region (homeobox) is located at residues 182–241 (GMLRRAVFSDVQRKALEKMFQKQKYISKPDRKKLAAKLGLKDSQVKIWFQNRRMKWRNSK). Basic and acidic residues predominate over residues 300 to 309 (DPRHLRDPRL). Residues 330-345 (SDSEDDEEGEEEITVS) are compositionally biased toward acidic residues.

This sequence belongs to the H2.0 homeobox family.

Its subcellular location is the nucleus. In terms of biological role, could have a role in patterning the central nervous system during embryogenesis. Has a key role in regulating the distinct phenotypic features that distinguish two major classes of ventral interneurons, V0 and V1 neurons. Regulates the transcription factor profile, neurotransmitter phenotype, intraspinal migratory path and axonal trajectory of V0 neurons, features that differentiate them from an adjacent set of V1 neurons. In Bos taurus (Bovine), this protein is Homeobox protein DBX1 (DBX1).